Here is a 727-residue protein sequence, read N- to C-terminus: Procollagen-lysine,2-oxoglutarate 5-dioxygenase 1 (727 aa).

Residues 1–18 form the signal peptide; it reads MRPLLLLAPLGWLLLAEA. N-linked (GlcNAc...) asparagine glycosylation is found at Asn163, Asn197, and Asn538. Residues 636 to 727 enclose the Fe2OG dioxygenase domain; sequence QFDLAFVVRY…RYIAVSFVDP (92 aa). Residues His656 and Asp658 each coordinate Fe cation. Residue Asn686 is glycosylated (N-linked (GlcNAc...) asparagine). His708 provides a ligand contact to Fe cation. Arg718 is an active-site residue.

As to quaternary structure, homodimer. Identified in a complex with P3H3 and P3H4. Fe(2+) is required as a cofactor. The cofactor is L-ascorbate.

It localises to the rough endoplasmic reticulum membrane. The catalysed reaction is L-lysyl-[collagen] + 2-oxoglutarate + O2 = (5R)-5-hydroxy-L-lysyl-[collagen] + succinate + CO2. Part of a complex composed of PLOD1, P3H3 and P3H4 that catalyzes hydroxylation of lysine residues in collagen alpha chains and is required for normal assembly and cross-linkling of collagen fibrils. Forms hydroxylysine residues in -Xaa-Lys-Gly- sequences in collagens. These hydroxylysines serve as sites of attachment for carbohydrate units and are essential for the stability of the intermolecular collagen cross-links. The protein is Procollagen-lysine,2-oxoglutarate 5-dioxygenase 1 (PLOD1) of Pongo abelii (Sumatran orangutan).